Here is an 87-residue protein sequence, read N- to C-terminus: MVVIRLARGGAKKRPFYQVVVADQRRSRDGRYIENLGFYNPLAKGQEVELRLDMDAYNAWIEKGAQPSDRVKALAKGYKPTTEEATA.

Belongs to the bacterial ribosomal protein bS16 family.

The polypeptide is Small ribosomal subunit protein bS16 (Psychrobacter sp. (strain PRwf-1)).